The following is a 468-amino-acid chain: 3-isopropylmalate dehydratase large subunit (468 aa).

[4Fe-4S] cluster contacts are provided by cysteine 349, cysteine 409, and cysteine 412.

This sequence belongs to the aconitase/IPM isomerase family. LeuC type 1 subfamily. Heterodimer of LeuC and LeuD. [4Fe-4S] cluster is required as a cofactor.

The catalysed reaction is (2R,3S)-3-isopropylmalate = (2S)-2-isopropylmalate. It functions in the pathway amino-acid biosynthesis; L-leucine biosynthesis; L-leucine from 3-methyl-2-oxobutanoate: step 2/4. In terms of biological role, catalyzes the isomerization between 2-isopropylmalate and 3-isopropylmalate, via the formation of 2-isopropylmaleate. The chain is 3-isopropylmalate dehydratase large subunit from Ruegeria pomeroyi (strain ATCC 700808 / DSM 15171 / DSS-3) (Silicibacter pomeroyi).